Consider the following 384-residue polypeptide: 8-amino-7-oxononanoate synthase (384 aa).

Arginine 21 lines the substrate pocket. 108-109 (GF) contacts pyridoxal 5'-phosphate. Histidine 133 serves as a coordination point for substrate. Pyridoxal 5'-phosphate-binding residues include serine 179, histidine 207, and threonine 233. An N6-(pyridoxal phosphate)lysine modification is found at lysine 236. Threonine 352 contacts substrate.

The protein belongs to the class-II pyridoxal-phosphate-dependent aminotransferase family. BioF subfamily. In terms of assembly, homodimer. It depends on pyridoxal 5'-phosphate as a cofactor.

The enzyme catalyses 6-carboxyhexanoyl-[ACP] + L-alanine + H(+) = (8S)-8-amino-7-oxononanoate + holo-[ACP] + CO2. The protein operates within cofactor biosynthesis; biotin biosynthesis. Catalyzes the decarboxylative condensation of pimeloyl-[acyl-carrier protein] and L-alanine to produce 8-amino-7-oxononanoate (AON), [acyl-carrier protein], and carbon dioxide. The protein is 8-amino-7-oxononanoate synthase of Enterobacter sp. (strain 638).